A 655-amino-acid chain; its full sequence is p-hydroxybenzoic acid efflux pump subunit AaeB (655 aa).

Transmembrane regions (helical) follow at residues 13–33, 38–58, 69–89, 93–113, 121–141, 152–172, 370–390, 407–427, 431–451, 459–479, and 482–502; these read FAVK…HFQL, WAVL…GGEP, LRII…ISMI, LLMI…SSLV, WGLS…EPLL, EIVI…PRSI, LFWL…IAVV, FIYG…VIIP, QSML…GIEV, MGAL…TFHF, and FLDS…VILL.

The protein belongs to the aromatic acid exporter ArAE (TC 2.A.85) family.

The protein resides in the cell inner membrane. Functionally, forms an efflux pump with AaeA. Could function as a metabolic relief valve, allowing to eliminate certain compounds when they accumulate to high levels in the cell. In Salmonella arizonae (strain ATCC BAA-731 / CDC346-86 / RSK2980), this protein is p-hydroxybenzoic acid efflux pump subunit AaeB.